The primary structure comprises 374 residues: Translocating chain-associated membrane protein 1 (374 aa).

The Cytoplasmic portion of the chain corresponds to 1 to 29 (MAIRKKSTKSPPVLSHEFVLQNHADIVSC). The helical transmembrane segment at 30 to 50 (VAMVFLLGLMFEITAKASIIF) threads the bilayer. The Lumenal portion of the chain corresponds to 51-76 (VTLQYNVTLPATEEQATESVSLYYYG). The N-linked (GlcNAc...) asparagine glycan is linked to Asn56. Residues 77-97 (IKDLATVFFYMLVAIIIHAVI) traverse the membrane as a helical segment. The Cytoplasmic portion of the chain corresponds to 98–121 (QEYMLDKINRRMHFSKTKHSKFNE). Positions 117 to 326 (SKFNESGQLS…NFQLRRWREH (210 aa)) constitute a TLC domain. Residues 122–142 (SGQLSAFYLFACVWGTFILIS) form a helical membrane-spanning segment. Residues 143-159 (ENYISDPTILWRAYPHN) lie on the Lumenal side of the membrane. Residues 160 to 180 (LMTFQMKFFYISQLAYWLHAF) traverse the membrane as a helical segment. At 181 to 192 (PELYFQKTKKED) the chain is on the cytoplasmic side. A helical membrane pass occupies residues 193-213 (IPRQLVYIGLYLFHIAGAYLL). The Lumenal portion of the chain corresponds to 214–217 (NLNH). The helical transmembrane segment at 218 to 238 (LGLVLLVLHYFVEFLFHISRL) threads the bilayer. Residues 239–251 (FYFSNEKYQKGFS) lie on the Cytoplasmic side of the membrane. A helical transmembrane segment spans residues 252–272 (LWAVLFVLGRLLTLILSVLTV). Residues 273 to 297 (GFGLARAENQKLDFSTGNFNVLAVR) lie on the Lumenal side of the membrane. A helical transmembrane segment spans residues 298 to 318 (IAVLASICVTQAFMMWKFINF). The Cytoplasmic segment spans residues 319 to 374 (QLRRWREHSAFQAPAVKKKPTVTKGRSSKKGTENGVNGTLTSNVADSPRNKKEKSS). The span at 334-347 (VKKKPTVTKGRSSK) shows a compositional bias: basic residues. The disordered stretch occupies residues 334 to 374 (VKKKPTVTKGRSSKKGTENGVNGTLTSNVADSPRNKKEKSS). Polar residues predominate over residues 352-363 (NGVNGTLTSNVA). The residue at position 365 (Ser365) is a Phosphoserine.

This sequence belongs to the TRAM family. Interacts with SEC61B. May interact with Derlin-1/DERL1. In terms of assembly, (Microbial infection) Interacts with human cytomegalovirus/HHV-5 proteins US2 and US11. In terms of processing, N-glycosylated.

It is found in the endoplasmic reticulum membrane. Involved in the translocation of nascent protein chains into or through the endoplasmic reticulum (ER) membrane by facilitating the proper chain positioning at the SEC61 channel. Regulates the exposure of nascent secretory protein chain to the cytosol during translocation into the ER. May affect the phospholipid bilayer in the vicinity of the lateral gate of the SEC61 channel, thereby facilitating ER protein transport. Intimately associates with transmembrane (TM) domain of nascent membrane proteins during the entire integration process into the ER membrane. Associates with the second TM domain of G-protein-coupled receptor opsin/OPSD nascent chain in the ER membrane, which may facilitate its integration into the membrane. Under conditions of ER stress, participates in the disposal of misfolded ER membrane proteins during the unfolded protein response (UPR), an integrated stress response (ISR) pathway, by selectively retrotranslocating misfolded ER-membrane proteins from the ER into the cytosol where they are ubiquitinated and degraded by the proteasome. Functionally, (Microbial infection) In case of cytomegalovirus infection, participates in US2- and US11-mediated ER-to-cytosol retrotranslocation and subsequent degradation of major histocompatibility complex (MHC) class I heavy chains, thereby decreasing the immune detection by cytotoxic T-cells. The polypeptide is Translocating chain-associated membrane protein 1 (Homo sapiens (Human)).